The primary structure comprises 292 residues: uncharacterized protein (292 aa).

Disordered stretches follow at residues 29–50 and 166–292; these read SEKP…LRDS and VKRK…EELK. S50 carries the phosphoserine modification. Composition is skewed to polar residues over residues 176-189 and 208-217; these read NSKN…PVNN and GSPTNFSKLI. Basic and acidic residues predominate over residues 221 to 239; that stretch reads YKDEWLQQQKADSDRRTPK. Polar residues-rich tracts occupy residues 240–250 and 260–270; these read TSEASVSTQST and DTETPQNSETP.

In terms of processing, phosphorylated upon DNA damage.

This is an uncharacterized protein from Rattus norvegicus (Rat).